Here is a 100-residue protein sequence, read N- to C-terminus: Integration host factor subunit alpha (100 aa).

Belongs to the bacterial histone-like protein family. In terms of assembly, heterodimer of an alpha and a beta chain.

In terms of biological role, this protein is one of the two subunits of integration host factor, a specific DNA-binding protein that functions in genetic recombination as well as in transcriptional and translational control. The chain is Integration host factor subunit alpha from Caulobacter sp. (strain K31).